The sequence spans 189 residues: Adenylate kinase (189 aa).

An ATP-binding site is contributed by 12-17; that stretch reads GSGKTT. Residues 33–62 form an NMP region; the sequence is STGDLLRAEVASGSELGKLIDGFISKGNLV. AMP-binding positions include Thr34, Arg39, 60 to 62, 87 to 90, and Gln94; these read NLV and GYPR. The interval 129–135 is LID; sequence GRARGAD. Arg130 provides a ligand contact to ATP. 2 residues coordinate AMP: Arg132 and Arg144. Arg172 serves as a coordination point for ATP.

It belongs to the adenylate kinase family. In terms of assembly, monomer.

Its subcellular location is the cytoplasm. The enzyme catalyses AMP + ATP = 2 ADP. Its pathway is purine metabolism; AMP biosynthesis via salvage pathway; AMP from ADP: step 1/1. Catalyzes the reversible transfer of the terminal phosphate group between ATP and AMP. Plays an important role in cellular energy homeostasis and in adenine nucleotide metabolism. The protein is Adenylate kinase of Campylobacter concisus (strain 13826).